The sequence spans 33 residues: Cytochrome b6-f complex subunit 7 (33 aa).

The helical transmembrane segment at 5-25 threads the bilayer; it reads IFNTAVITFTLVLVGLGAGYL.

It belongs to the PetM family. The 4 large subunits of the cytochrome b6-f complex are cytochrome b6, subunit IV (17 kDa polypeptide, PetD), cytochrome f and the Rieske protein, while the 4 small subunits are PetG, PetL, PetM and PetN. The complex functions as a dimer.

The protein resides in the cellular thylakoid membrane. Component of the cytochrome b6-f complex, which mediates electron transfer between photosystem II (PSII) and photosystem I (PSI), cyclic electron flow around PSI, and state transitions. The sequence is that of Cytochrome b6-f complex subunit 7 from Thermosynechococcus vestitus (strain NIES-2133 / IAM M-273 / BP-1).